Reading from the N-terminus, the 261-residue chain is Sepiapterin reductase (261 aa).

Methionine 1 is subject to N-acetylmethionine. NADP(+) is bound at residue 15–21; that stretch reads GASRGFG. Residue serine 33 is modified to Phosphoserine. 43–44 is an NADP(+) binding site; it reads RS. Serine 46 carries the post-translational modification Phosphoserine. 70-71 contributes to the NADP(+) binding site; the sequence is DL. Substrate-binding positions include 158 to 159 and tyrosine 171; that span reads SL. Lysine 175 is an NADP(+) binding site. At serine 196 the chain carries Phosphoserine. Glycine 200 is a substrate binding site. 202 to 207 provides a ligand contact to NADP(+); the sequence is LDNDMQ. Serine 214 is subject to Phosphoserine. Substrate contacts are provided by lysine 222 and aspartate 258.

The protein belongs to the sepiapterin reductase family. Homodimer.

Its subcellular location is the cytoplasm. The catalysed reaction is L-erythro-7,8-dihydrobiopterin + NADP(+) = L-sepiapterin + NADPH + H(+). It catalyses the reaction (6R)-L-erythro-5,6,7,8-tetrahydrobiopterin + 2 NADP(+) = 6-pyruvoyl-5,6,7,8-tetrahydropterin + 2 NADPH + 2 H(+). Its function is as follows. Catalyzes the final one or two reductions in tetra-hydrobiopterin biosynthesis to form 5,6,7,8-tetrahydrobiopterin. The protein is Sepiapterin reductase (Spr) of Mus musculus (Mouse).